The primary structure comprises 455 residues: Ribulose bisphosphate carboxylase large chain (455 aa).

Lys-5 carries the N6,N6,N6-trimethyllysine modification. Substrate contacts are provided by Asn-114 and Thr-164. Lys-166 functions as the Proton acceptor in the catalytic mechanism. Lys-168 contacts substrate. Mg(2+)-binding residues include Lys-192, Asp-194, and Glu-195. Lys-192 is modified (N6-carboxylysine). His-285 serves as the catalytic Proton acceptor. Residues Arg-286, His-318, and Ser-370 each contribute to the substrate site.

This sequence belongs to the RuBisCO large chain family. Type I subfamily. In terms of assembly, heterohexadecamer of 8 large chains and 8 small chains; disulfide-linked. The disulfide link is formed within the large subunit homodimers. It depends on Mg(2+) as a cofactor. Post-translationally, the disulfide bond which can form in the large chain dimeric partners within the hexadecamer appears to be associated with oxidative stress and protein turnover.

Its subcellular location is the plastid. The protein localises to the chloroplast. The catalysed reaction is 2 (2R)-3-phosphoglycerate + 2 H(+) = D-ribulose 1,5-bisphosphate + CO2 + H2O. The enzyme catalyses D-ribulose 1,5-bisphosphate + O2 = 2-phosphoglycolate + (2R)-3-phosphoglycerate + 2 H(+). Its function is as follows. RuBisCO catalyzes two reactions: the carboxylation of D-ribulose 1,5-bisphosphate, the primary event in carbon dioxide fixation, as well as the oxidative fragmentation of the pentose substrate in the photorespiration process. Both reactions occur simultaneously and in competition at the same active site. The protein is Ribulose bisphosphate carboxylase large chain of Senna didymobotrya (Popcorn cassia).